A 220-amino-acid chain; its full sequence is Guanylate kinase (220 aa).

Residues 15-194 (GLMLVISSPS…AFEGIEAIVK (180 aa)) form the Guanylate kinase-like domain. 22 to 29 (SPSGAGKS) contributes to the ATP binding site.

It belongs to the guanylate kinase family.

Its subcellular location is the cytoplasm. The catalysed reaction is GMP + ATP = GDP + ADP. Essential for recycling GMP and indirectly, cGMP. This chain is Guanylate kinase, found in Agrobacterium fabrum (strain C58 / ATCC 33970) (Agrobacterium tumefaciens (strain C58)).